The following is a 240-amino-acid chain: UDP-2,3-diacylglucosamine hydrolase (240 aa).

Residues D7, H9, D40, N78, and H113 each coordinate Mn(2+). Position 78–79 (78–79 (NR)) interacts with substrate. The substrate site is built by D121, S159, K166, and H194. Residues H194 and H196 each coordinate Mn(2+).

It belongs to the LpxH family. Requires Mn(2+) as cofactor.

It localises to the cell inner membrane. The catalysed reaction is UDP-2-N,3-O-bis[(3R)-3-hydroxytetradecanoyl]-alpha-D-glucosamine + H2O = 2-N,3-O-bis[(3R)-3-hydroxytetradecanoyl]-alpha-D-glucosaminyl 1-phosphate + UMP + 2 H(+). It functions in the pathway glycolipid biosynthesis; lipid IV(A) biosynthesis; lipid IV(A) from (3R)-3-hydroxytetradecanoyl-[acyl-carrier-protein] and UDP-N-acetyl-alpha-D-glucosamine: step 4/6. In terms of biological role, hydrolyzes the pyrophosphate bond of UDP-2,3-diacylglucosamine to yield 2,3-diacylglucosamine 1-phosphate (lipid X) and UMP by catalyzing the attack of water at the alpha-P atom. Involved in the biosynthesis of lipid A, a phosphorylated glycolipid that anchors the lipopolysaccharide to the outer membrane of the cell. The polypeptide is UDP-2,3-diacylglucosamine hydrolase (Pseudomonas putida (strain ATCC 47054 / DSM 6125 / CFBP 8728 / NCIMB 11950 / KT2440)).